We begin with the raw amino-acid sequence, 227 residues long: Ion-translocating oxidoreductase complex subunit E (227 aa).

A run of 5 helical transmembrane segments spans residues 57–77, 89–109, 111–131, 146–166, and 200–220; these read LGLG…ISLF, IYVM…NAFA, PVYQ…IVIG, AFDG…LGAI, and GLLL…ILAV.

Belongs to the NqrDE/RnfAE family. In terms of assembly, the complex is composed of six subunits: RnfA, RnfB, RnfC, RnfD, RnfE and RnfG.

It is found in the cell inner membrane. Functionally, part of a membrane-bound complex that couples electron transfer with translocation of ions across the membrane. This chain is Ion-translocating oxidoreductase complex subunit E, found in Haemophilus ducreyi (strain 35000HP / ATCC 700724).